The sequence spans 870 residues: DNA topoisomerase 1 (870 aa).

Residues 1–128 (MKSPRFRHSQ…RVYKSSFEAA (128 aa)) form the Toprim domain. The 436-residue stretch at 143 to 578 (YDGLAYSAKA…QTNAFVQKIT (436 aa)) folds into the Topo IA-type catalytic domain. Residues 180 to 185 (SSGRVQ) are interaction with DNA. Catalysis depends on Y299, which acts as the O-(5'-phospho-DNA)-tyrosine intermediate. 3 consecutive C4-type zinc fingers follow at residues 603 to 627 (CQCP…HPNC), 693 to 717 (CPKC…QNGC), and 784 to 807 (CPLC…KRGC).

This sequence belongs to the type IA topoisomerase family. In terms of assembly, monomer.

It catalyses the reaction ATP-independent breakage of single-stranded DNA, followed by passage and rejoining.. In terms of biological role, releases the supercoiling and torsional tension of DNA, which is introduced during the DNA replication and transcription, by transiently cleaving and rejoining one strand of the DNA duplex. Introduces a single-strand break via transesterification at a target site in duplex DNA. The scissile phosphodiester is attacked by the catalytic tyrosine of the enzyme, resulting in the formation of a DNA-(5'-phosphotyrosyl)-enzyme intermediate and the expulsion of a 3'-OH DNA strand. The free DNA strand then undergoes passage around the unbroken strand, thus removing DNA supercoils. Finally, in the religation step, the DNA 3'-OH attacks the covalent intermediate to expel the active-site tyrosine and restore the DNA phosphodiester backbone. The polypeptide is DNA topoisomerase 1 (topX) (Bacillus anthracis).